A 145-amino-acid chain; its full sequence is Hemoglobin subunit beta (145 aa).

Residues 1–145 (MLTAEEKAAV…VANALAHRYH (145 aa)) enclose the Globin domain. Thr11 bears the Phosphothreonine mark. Ser43 carries the phosphoserine modification. Residue Lys58 is modified to N6-acetyllysine. Residue His62 coordinates heme b. Lys81 bears the N6-acetyllysine mark. Residue His91 participates in heme b binding. Cys92 is subject to S-nitrosocysteine.

The protein belongs to the globin family. As to quaternary structure, heterotetramer of two alpha chains and two beta chains. As to expression, red blood cells.

Its function is as follows. Involved in oxygen transport from the lung to the various peripheral tissues. This chain is Hemoglobin subunit beta (HBB), found in Tragelaphus strepsiceros (Greater kudu).